The following is a 1227-amino-acid chain: DNA-directed RNA polymerase subunit beta' (1227 aa).

4 residues coordinate Zn(2+): Cys-60, Cys-62, Cys-75, and Cys-78. Asp-449, Asp-451, and Asp-453 together coordinate Mg(2+). Zn(2+)-binding residues include Cys-847, Cys-921, Cys-928, and Cys-931.

Belongs to the RNA polymerase beta' chain family. The RNAP catalytic core consists of 2 alpha, 1 beta, 1 beta' and 1 omega subunit. When a sigma factor is associated with the core the holoenzyme is formed, which can initiate transcription. Mg(2+) serves as cofactor. Zn(2+) is required as a cofactor.

The enzyme catalyses RNA(n) + a ribonucleoside 5'-triphosphate = RNA(n+1) + diphosphate. Its function is as follows. DNA-dependent RNA polymerase catalyzes the transcription of DNA into RNA using the four ribonucleoside triphosphates as substrates. This is DNA-directed RNA polymerase subunit beta' from Lysinibacillus sphaericus (strain C3-41).